The following is a 624-amino-acid chain: tRNA uridine 5-carboxymethylaminomethyl modification enzyme MnmG (624 aa).

FAD-binding positions include 13 to 18 (GGGHAG), V125, and S180. An NAD(+)-binding site is contributed by 273–287 (GPRYCPSIEDKIVRF). Q370 contributes to the FAD binding site.

It belongs to the MnmG family. Homodimer. Heterotetramer of two MnmE and two MnmG subunits. It depends on FAD as a cofactor.

Its subcellular location is the cytoplasm. Functionally, NAD-binding protein involved in the addition of a carboxymethylaminomethyl (cmnm) group at the wobble position (U34) of certain tRNAs, forming tRNA-cmnm(5)s(2)U34. In Legionella pneumophila (strain Corby), this protein is tRNA uridine 5-carboxymethylaminomethyl modification enzyme MnmG.